A 419-amino-acid chain; its full sequence is S-adenosylmethionine synthase (419 aa).

His15 serves as a coordination point for ATP. A Mg(2+)-binding site is contributed by Asp17. Glu43 contributes to the K(+) binding site. 2 residues coordinate L-methionine: Glu56 and Gln100. Residues 100–110 are flexible loop; the sequence is QSPDIAQGVNE. Residues 171–173, 248–249, Asp257, 263–264, Ala280, and Lys284 contribute to the ATP site; these read DGK, KF, and RK. Asp257 contacts L-methionine. Position 288 (Lys288) interacts with L-methionine.

The protein belongs to the AdoMet synthase family. In terms of assembly, homotetramer; dimer of dimers. Requires Mg(2+) as cofactor. K(+) is required as a cofactor.

It localises to the cytoplasm. The catalysed reaction is L-methionine + ATP + H2O = S-adenosyl-L-methionine + phosphate + diphosphate. It participates in amino-acid biosynthesis; S-adenosyl-L-methionine biosynthesis; S-adenosyl-L-methionine from L-methionine: step 1/1. Its function is as follows. Catalyzes the formation of S-adenosylmethionine (AdoMet) from methionine and ATP. The overall synthetic reaction is composed of two sequential steps, AdoMet formation and the subsequent tripolyphosphate hydrolysis which occurs prior to release of AdoMet from the enzyme. This Prochlorococcus marinus (strain MIT 9313) protein is S-adenosylmethionine synthase.